The sequence spans 881 residues: Alanine--tRNA ligase (881 aa).

The protein belongs to the class-II aminoacyl-tRNA synthetase family.

Its subcellular location is the cytoplasm. It catalyses the reaction tRNA(Ala) + L-alanine + ATP = L-alanyl-tRNA(Ala) + AMP + diphosphate. Catalyzes the attachment of alanine to tRNA(Ala) in a two-step reaction: alanine is first activated by ATP to form Ala-AMP and then transferred to the acceptor end of tRNA(Ala). Also edits incorrectly charged Ser-tRNA(Ala) and Gly-tRNA(Ala) via its editing domain. The protein is Alanine--tRNA ligase (alaS) of Lacticaseibacillus paracasei (strain ATCC 334 / BCRC 17002 / CCUG 31169 / CIP 107868 / KCTC 3260 / NRRL B-441) (Lactobacillus paracasei).